The chain runs to 487 residues: Glutamyl-tRNA(Gln) amidotransferase subunit A (487 aa).

Catalysis depends on charge relay system residues Lys-79 and Ser-158. Ser-182 (acyl-ester intermediate) is an active-site residue.

It belongs to the amidase family. GatA subfamily. In terms of assembly, heterotrimer of A, B and C subunits.

It carries out the reaction L-glutamyl-tRNA(Gln) + L-glutamine + ATP + H2O = L-glutaminyl-tRNA(Gln) + L-glutamate + ADP + phosphate + H(+). In terms of biological role, allows the formation of correctly charged Gln-tRNA(Gln) through the transamidation of misacylated Glu-tRNA(Gln) in organisms which lack glutaminyl-tRNA synthetase. The reaction takes place in the presence of glutamine and ATP through an activated gamma-phospho-Glu-tRNA(Gln). This chain is Glutamyl-tRNA(Gln) amidotransferase subunit A, found in Ehrlichia ruminantium (strain Welgevonden).